The chain runs to 452 residues: uncharacterized protein (452 aa).

Residue 72-79 (GPPGSGKT) coordinates ATP.

The protein belongs to the AAA ATPase family. RarA/MGS1/WRNIP1 subfamily.

This is an uncharacterized protein from Mycobacterium tuberculosis (strain ATCC 25618 / H37Rv).